The sequence spans 37 residues: Large ribosomal subunit protein bL36A (37 aa).

It belongs to the bacterial ribosomal protein bL36 family.

In Actinobacillus pleuropneumoniae serotype 5b (strain L20), this protein is Large ribosomal subunit protein bL36A.